Here is a 157-residue protein sequence, read N- to C-terminus: Heavy metal-associated isoprenylated plant protein 16 (157 aa).

One can recognise an HMA domain in the interval 2-71 (KQKILIRIAM…KVAFAELVSV (70 aa)). The disordered stretch occupies residues 73 to 115 (KVEPPKDGDKKPEEEKKPEEKKPEEKKPEEKKPEPCCQPWQKP). A compositionally biased stretch (basic and acidic residues) spans 75-106 (EPPKDGDKKPEEEKKPEEKKPEEKKPEEKKPE). At cysteine 154 the chain carries Cysteine methyl ester. Cysteine 154 carries S-farnesyl cysteine lipidation. The propeptide at 155–157 (RIM) is removed in mature form.

The protein belongs to the HIPP family.

Probable heavy-metal-binding protein. In Arabidopsis thaliana (Mouse-ear cress), this protein is Heavy metal-associated isoprenylated plant protein 16.